The following is a 147-amino-acid chain: MAGKVVMYTDGACKGNPGPGGWGVVLRYGDACKTMHGGELQTTNNRMELMAAIRGLRELKRACQVELYTDSQYVRKGITEWMSGWKRNGWKTSAKKPVKNADLWQELDAETARHTVNWHWVKGHSGHPDNELADELANRGVRELNGA.

Residues 1–142 (MAGKVVMYTD…ADELANRGVR (142 aa)) enclose the RNase H type-1 domain. Mg(2+)-binding residues include aspartate 10, glutamate 48, aspartate 70, and aspartate 134.

It belongs to the RNase H family. As to quaternary structure, monomer. The cofactor is Mg(2+).

The protein localises to the cytoplasm. It carries out the reaction Endonucleolytic cleavage to 5'-phosphomonoester.. Its function is as follows. Endonuclease that specifically degrades the RNA of RNA-DNA hybrids. The chain is Ribonuclease H from Marinobacter nauticus (strain ATCC 700491 / DSM 11845 / VT8) (Marinobacter aquaeolei).